The primary structure comprises 718 residues: Polyribonucleotide nucleotidyltransferase (718 aa).

Residues Asp487 and Asp493 each coordinate Mg(2+). A KH domain is found at 554 to 613 (PRIETFKIPTDKIREVIGTGGKVIREIVEKTGAKVNIEDDGTVKVASSDGESIKAAIKWI). Residues 623 to 691 (GEIYEGTVVK…DRGKTRLSMK (69 aa)) form the S1 motif domain. Residues 692–718 (VVDQETGEDLEAKQKAEGDAPREAAGE) are disordered. Residues 701–718 (LEAKQKAEGDAPREAAGE) show a composition bias toward basic and acidic residues.

It belongs to the polyribonucleotide nucleotidyltransferase family. The cofactor is Mg(2+).

It localises to the cytoplasm. The enzyme catalyses RNA(n+1) + phosphate = RNA(n) + a ribonucleoside 5'-diphosphate. Functionally, involved in mRNA degradation. Catalyzes the phosphorolysis of single-stranded polyribonucleotides processively in the 3'- to 5'-direction. The polypeptide is Polyribonucleotide nucleotidyltransferase (Nitrobacter winogradskyi (strain ATCC 25391 / DSM 10237 / CIP 104748 / NCIMB 11846 / Nb-255)).